The sequence spans 471 residues: Argininosuccinate lyase (471 aa).

Belongs to the lyase 1 family. Argininosuccinate lyase subfamily.

The protein localises to the cytoplasm. The catalysed reaction is 2-(N(omega)-L-arginino)succinate = fumarate + L-arginine. The protein operates within amino-acid biosynthesis; L-arginine biosynthesis; L-arginine from L-ornithine and carbamoyl phosphate: step 3/3. In Ralstonia pickettii (strain 12J), this protein is Argininosuccinate lyase.